Here is a 255-residue protein sequence, read N- to C-terminus: MSDYIVVKCGGSMLDQLNDVFFDCIKKLQQKYKVVIVHGGGPEIDAKLKDCNIKVEKRDGLRVTPREVMDIVQMVLCGSTNKKLVMNLQKHNLLAVGCSGCDGNLLQVQPVSKEIGYVGEVSYVETALLKGLINMNYIPVIAPIGINENEIYNINADNAAAGIAAALSAKELIFITDVDGILHEGKLVKKTDEFEIDTFIEKGVITGGMIPKVQAALASLKMGVQKVSVVNGTKDFAEVTGECIGTTVTKGVNIV.

Substrate is bound by residues 40-41 (GG), arginine 62, and asparagine 153.

The protein belongs to the acetylglutamate kinase family. ArgB subfamily.

Its subcellular location is the cytoplasm. It catalyses the reaction N-acetyl-L-glutamate + ATP = N-acetyl-L-glutamyl 5-phosphate + ADP. It functions in the pathway amino-acid biosynthesis; L-arginine biosynthesis; N(2)-acetyl-L-ornithine from L-glutamate: step 2/4. Functionally, catalyzes the ATP-dependent phosphorylation of N-acetyl-L-glutamate. In Bacillus mycoides (strain KBAB4) (Bacillus weihenstephanensis), this protein is Acetylglutamate kinase.